Here is a 176-residue protein sequence, read N- to C-terminus: dCTP deaminase (176 aa).

Residues 99–104 (RSTLAR) and Asp-115 contribute to the dCTP site. Glu-125 serves as the catalytic Proton donor/acceptor. Gln-163 contributes to the dCTP binding site.

The protein belongs to the dCTP deaminase family. In terms of assembly, homotrimer.

It carries out the reaction dCTP + H2O + H(+) = dUTP + NH4(+). It participates in pyrimidine metabolism; dUMP biosynthesis; dUMP from dCTP (dUTP route): step 1/2. Functionally, catalyzes the deamination of dCTP to dUTP. The chain is dCTP deaminase from Pyrobaculum neutrophilum (strain DSM 2338 / JCM 9278 / NBRC 100436 / V24Sta) (Thermoproteus neutrophilus).